A 387-amino-acid chain; its full sequence is Succinate--CoA ligase [ADP-forming] subunit beta (387 aa).

Positions 9 to 236 (RDLFEKYGVP…KAAADPLEAK (228 aa)) constitute an ATP-grasp domain. ATP is bound by residues Lys45, 52–54 (GRG), Ala94, and Glu99. Positions 191 and 205 each coordinate Mg(2+). Residues Asn256 and 318–320 (GIT) each bind substrate.

It belongs to the succinate/malate CoA ligase beta subunit family. In terms of assembly, heterotetramer of two alpha and two beta subunits. Requires Mg(2+) as cofactor.

It catalyses the reaction succinate + ATP + CoA = succinyl-CoA + ADP + phosphate. The enzyme catalyses GTP + succinate + CoA = succinyl-CoA + GDP + phosphate. The protein operates within carbohydrate metabolism; tricarboxylic acid cycle; succinate from succinyl-CoA (ligase route): step 1/1. Functionally, succinyl-CoA synthetase functions in the citric acid cycle (TCA), coupling the hydrolysis of succinyl-CoA to the synthesis of either ATP or GTP and thus represents the only step of substrate-level phosphorylation in the TCA. The beta subunit provides nucleotide specificity of the enzyme and binds the substrate succinate, while the binding sites for coenzyme A and phosphate are found in the alpha subunit. The protein is Succinate--CoA ligase [ADP-forming] subunit beta of Leifsonia xyli subsp. xyli (strain CTCB07).